Reading from the N-terminus, the 363-residue chain is L-serine dehydratase/L-threonine deaminase (363 aa).

Alanine 2 is subject to N-acetylalanine. Lysine 41 is modified (N6-(pyridoxal phosphate)lysine). A disordered region spans residues 74-98; sequence RGRSHSGDEQPHVRSQALLPDTPSP. Residue proline 164 coordinates pyridoxal 5'-phosphate.

It belongs to the serine/threonine dehydratase family. Homodimer. Pyridoxal 5'-phosphate serves as cofactor. Predominantly expressed in the periportal regions of the liver.

The protein localises to the cytoplasm. It carries out the reaction L-serine = pyruvate + NH4(+). The catalysed reaction is L-threonine = 2-oxobutanoate + NH4(+). It participates in carbohydrate biosynthesis; gluconeogenesis. Its function is as follows. Catalyzes the pyridoxal-phosphate-dependent dehydrative deamination of L-threonine and L-serine to ammonia and alpha-ketobutyrate and pyruvate, respectively. The protein is L-serine dehydratase/L-threonine deaminase (Sds) of Rattus norvegicus (Rat).